Reading from the N-terminus, the 154-residue chain is Protein X (154 aa).

Residues 68 to 117 (PCALRFTSARRMETTVNAHQILPKVLHKRTLGLPAMSTTDLEAYFKDCVF) are mitochondrial targeting sequence.

It belongs to the orthohepadnavirus protein X family. As to quaternary structure, may form homodimer. May interact with host CEBPA, CFLAR, CREB1, DDB1, E4F1, HBXIP, HSPD1/HSP60, NFKBIA, POLR2E and SMAD4. Interacts with host SMC5-SMC6 complex and induces its degradation. Interacts with host TRPC4AP; leading to prevent ubiquitination of TRPC4AP. Interacts with host PLSCR1; this interaction promotes ubiquitination and degradation of HBx and impairs HBx-mediated cell proliferation. A fraction may be phosphorylated in insect cells and HepG2 cells, a human hepatoblastoma cell line. Phosphorylated in vitro by host protein kinase C or mitogen-activated protein kinase. N-acetylated in insect cells.

Its subcellular location is the host cytoplasm. It is found in the host nucleus. The protein localises to the host mitochondrion. In terms of biological role, multifunctional protein that plays a role in silencing host antiviral defenses and promoting viral transcription. Does not seem to be essential for HBV infection. May be directly involved in development of cirrhosis and liver cancer (hepatocellular carcinoma). Most of cytosolic activities involve modulation of cytosolic calcium. The effect on apoptosis is controversial depending on the cell types in which the studies have been conducted. May induce apoptosis by localizing in mitochondria and causing loss of mitochondrial membrane potential. May also modulate apoptosis by binding host CFLAR, a key regulator of the death-inducing signaling complex (DISC). Promotes viral transcription by using the host E3 ubiquitin ligase DDB1 to target the SMC5-SMC6 complex to proteasomal degradation. This host complex would otherwise bind to viral episomal DNA, and prevents its transcription. Moderately stimulates transcription of many different viral and cellular transcription elements. Promoters and enhancers stimulated by HBx contain DNA binding sites for NF-kappa-B, AP-1, AP-2, c-EBP, ATF/CREB, or the calcium-activated factor NF-AT. In Homo sapiens (Human), this protein is Protein X.